The chain runs to 488 residues: Prostaglandin E2 receptor EP4 subtype (488 aa).

The Extracellular portion of the chain corresponds to 1–19 (MSIPGVNASFSSTPERLNS). Asn7 carries N-linked (GlcNAc...) asparagine glycosylation. Residues 20–43 (PVTIPAVMFIFGVVGNLVAIVVLC) form a helical membrane-spanning segment. Residues 44 to 55 (KSRKEQKETTFY) are Cytoplasmic-facing. A helical transmembrane segment spans residues 56–79 (TLVCGLAVTDLLGTLLVSPVTIAT). The Extracellular segment spans residues 80–96 (YMKGQWPGDQALCDYST). The cysteines at positions 92 and 170 are disulfide-linked. Residues 97–115 (FILLFFGLSGLSIICAMSI) form a helical membrane-spanning segment. The Cytoplasmic portion of the chain corresponds to 116 to 135 (ERYLAINHAYFYSHYVDKRL). The chain crosses the membrane as a helical span at residues 136–160 (AGLTLFAVYASNVLFCALPNMGLGR). Residues 161 to 184 (SERQYPGTWCFIDWTTNVTAYAAF) are Extracellular-facing. Residues 185-211 (SYMYAGFSSFLILATVLCNVLVCGALL) form a helical membrane-spanning segment. The Cytoplasmic portion of the chain corresponds to 212–270 (RMLRQFMRRTSLGTEQHHAAAAAAVASVACRGHAAASPALQRLSDFRRRRSFRRIAGAE). Residues 271 to 298 (IQMVILLIATSLVVLICSIPLVVRVFIN) form a helical membrane-spanning segment. The Extracellular segment spans residues 299–315 (QLYQPSVVKDISRNPDL). The chain crosses the membrane as a helical span at residues 316–335 (QAIRIASVNPILDPWIYILL). Residues 336–488 (RKTVLSKAIE…ETLKLSEKCI (153 aa)) lie on the Cytoplasmic side of the membrane. The tract at residues 358 to 380 (GRDGSAQHCSESRRTSSAMSGHS) is disordered. A phosphoserine mark is found at Ser377, Ser380, Ser382, and Ser385.

This sequence belongs to the G-protein coupled receptor 1 family. As to quaternary structure, interacts with FEM1A. Post-translationally, phosphorylation mediates agonist-mediated desensitization by promoting cytoplasmic retention.

It localises to the cell membrane. Receptor for prostaglandin E2 (PGE2). The activity of this receptor is mediated by G(s) proteins that stimulate adenylate cyclase. Has a relaxing effect on smooth muscle. May play an important role in regulating renal hemodynamics, intestinal epithelial transport, adrenal aldosterone secretion, and uterine function. This chain is Prostaglandin E2 receptor EP4 subtype (Ptger4), found in Rattus norvegicus (Rat).